A 223-amino-acid polypeptide reads, in one-letter code: Ribosome maturation factor RimM (223 aa).

Positions 142–223 (ADEFYWVDLI…RIVVDWEADY (82 aa)) constitute a PRC barrel domain.

Belongs to the RimM family. Binds ribosomal protein uS19.

The protein resides in the cytoplasm. Functionally, an accessory protein needed during the final step in the assembly of 30S ribosomal subunit, possibly for assembly of the head region. Essential for efficient processing of 16S rRNA. May be needed both before and after RbfA during the maturation of 16S rRNA. It has affinity for free ribosomal 30S subunits but not for 70S ribosomes. The protein is Ribosome maturation factor RimM of Burkholderia multivorans (strain ATCC 17616 / 249).